A 155-amino-acid chain; its full sequence is Ribosomal RNA large subunit methyltransferase H (155 aa).

S-adenosyl-L-methionine contacts are provided by residues Leu-72, Gly-103, and 122–127 (LSDLTL).

Belongs to the RNA methyltransferase RlmH family. In terms of assembly, homodimer.

Its subcellular location is the cytoplasm. It carries out the reaction pseudouridine(1915) in 23S rRNA + S-adenosyl-L-methionine = N(3)-methylpseudouridine(1915) in 23S rRNA + S-adenosyl-L-homocysteine + H(+). Specifically methylates the pseudouridine at position 1915 (m3Psi1915) in 23S rRNA. This is Ribosomal RNA large subunit methyltransferase H from Delftia acidovorans (strain DSM 14801 / SPH-1).